Consider the following 199-residue polypeptide: Large ribosomal subunit protein bL25 (199 aa).

The protein belongs to the bacterial ribosomal protein bL25 family. CTC subfamily. As to quaternary structure, part of the 50S ribosomal subunit; part of the 5S rRNA/L5/L18/L25 subcomplex. Contacts the 5S rRNA. Binds to the 5S rRNA independently of L5 and L18.

In terms of biological role, this is one of the proteins that binds to the 5S RNA in the ribosome where it forms part of the central protuberance. This Rickettsia akari (strain Hartford) protein is Large ribosomal subunit protein bL25.